A 496-amino-acid chain; its full sequence is L-arabinose isomerase (496 aa).

Mn(2+)-binding residues include glutamate 302, glutamate 329, histidine 346, and histidine 445.

This sequence belongs to the arabinose isomerase family. Mn(2+) is required as a cofactor.

The catalysed reaction is beta-L-arabinopyranose = L-ribulose. Its pathway is carbohydrate degradation; L-arabinose degradation via L-ribulose; D-xylulose 5-phosphate from L-arabinose (bacterial route): step 1/3. Catalyzes the conversion of L-arabinose to L-ribulose. The protein is L-arabinose isomerase of Thermotoga neapolitana (strain ATCC 49049 / DSM 4359 / NBRC 107923 / NS-E).